Here is a 395-residue protein sequence, read N- to C-terminus: Lipoyl synthase, mitochondrial (395 aa).

The transit peptide at 1-24 (MVKLPSASRIRSLATVPSTATRAF) directs the protein to the mitochondrion. [4Fe-4S] cluster contacts are provided by Cys-107, Cys-112, Cys-118, Cys-137, Cys-141, Cys-144, and Ser-357. One can recognise a Radical SAM core domain in the interval 122 to 346 (GKGNATATIM…KNVAEGMGFL (225 aa)).

Belongs to the radical SAM superfamily. Lipoyl synthase family. Requires [4Fe-4S] cluster as cofactor.

Its subcellular location is the mitochondrion. The catalysed reaction is [[Fe-S] cluster scaffold protein carrying a second [4Fe-4S](2+) cluster] + N(6)-octanoyl-L-lysyl-[protein] + 2 oxidized [2Fe-2S]-[ferredoxin] + 2 S-adenosyl-L-methionine + 4 H(+) = [[Fe-S] cluster scaffold protein] + N(6)-[(R)-dihydrolipoyl]-L-lysyl-[protein] + 4 Fe(3+) + 2 hydrogen sulfide + 2 5'-deoxyadenosine + 2 L-methionine + 2 reduced [2Fe-2S]-[ferredoxin]. It functions in the pathway protein modification; protein lipoylation via endogenous pathway; protein N(6)-(lipoyl)lysine from octanoyl-[acyl-carrier-protein]: step 2/2. Its function is as follows. Catalyzes the radical-mediated insertion of two sulfur atoms into the C-6 and C-8 positions of the octanoyl moiety bound to the lipoyl domains of lipoate-dependent enzymes, thereby converting the octanoylated domains into lipoylated derivatives. The chain is Lipoyl synthase, mitochondrial from Cryptococcus neoformans var. neoformans serotype D (strain B-3501A) (Filobasidiella neoformans).